The sequence spans 355 residues: Gibberellin 3-beta-dioxygenase 4 (355 aa).

The 101-residue stretch at 203 to 303 folds into the Fe2OG dioxygenase domain; sequence GRGAIRLNHY…RISIAYLWGG (101 aa). Residues H227, D229, and H284 each coordinate Fe cation. Residue R294 is part of the active site.

Belongs to the iron/ascorbate-dependent oxidoreductase family. GA3OX subfamily. It depends on L-ascorbate as a cofactor. Requires Fe cation as cofactor. In terms of tissue distribution, expressed in siliques and in seeds, specifically at the rim of the embryo and the outer integument. Also expressed in flowers. Not detected in roots, stems and leaves.

It carries out the reaction gibberellin A20 + 2-oxoglutarate + O2 = gibberellin A1 + succinate + CO2. The protein operates within plant hormone biosynthesis; gibberellin biosynthesis. Its function is as follows. Converts the inactive gibberellin (GA) precursors GA9 and GA20 in the bioactives gibberellins GA4 and GA1. Involved in the production of bioactive GA for reproductive development. The chain is Gibberellin 3-beta-dioxygenase 4 from Arabidopsis thaliana (Mouse-ear cress).